Reading from the N-terminus, the 95-residue chain is Co-chaperonin GroES (95 aa).

It belongs to the GroES chaperonin family. In terms of assembly, heptamer of 7 subunits arranged in a ring. Interacts with the chaperonin GroEL.

The protein resides in the cytoplasm. Together with the chaperonin GroEL, plays an essential role in assisting protein folding. The GroEL-GroES system forms a nano-cage that allows encapsulation of the non-native substrate proteins and provides a physical environment optimized to promote and accelerate protein folding. GroES binds to the apical surface of the GroEL ring, thereby capping the opening of the GroEL channel. This Methylocella silvestris (strain DSM 15510 / CIP 108128 / LMG 27833 / NCIMB 13906 / BL2) protein is Co-chaperonin GroES.